The chain runs to 335 residues: Anthranilate phosphoribosyltransferase (335 aa).

5-phospho-alpha-D-ribose 1-diphosphate contacts are provided by residues Gly-79, 82 to 83 (GD), Thr-87, 89 to 92 (NIST), 107 to 115 (KHCNQGVSS), and Ser-119. Residue Gly-79 coordinates anthranilate. Ser-91 is a Mg(2+) binding site. Asn-110 is a binding site for anthranilate. Arg-165 provides a ligand contact to anthranilate. Positions 223 and 224 each coordinate Mg(2+).

This sequence belongs to the anthranilate phosphoribosyltransferase family. In terms of assembly, homodimer. It depends on Mg(2+) as a cofactor.

It carries out the reaction N-(5-phospho-beta-D-ribosyl)anthranilate + diphosphate = 5-phospho-alpha-D-ribose 1-diphosphate + anthranilate. It participates in amino-acid biosynthesis; L-tryptophan biosynthesis; L-tryptophan from chorismate: step 2/5. Its function is as follows. Catalyzes the transfer of the phosphoribosyl group of 5-phosphorylribose-1-pyrophosphate (PRPP) to anthranilate to yield N-(5'-phosphoribosyl)-anthranilate (PRA). The chain is Anthranilate phosphoribosyltransferase from Buchnera aphidicola subsp. Diuraphis noxia.